A 288-amino-acid polypeptide reads, in one-letter code: Putative sugar uptake protein gbs2116 (288 aa).

10 helical membrane-spanning segments follow: residues 4-26, 33-50, 55-72, 85-107, 117-134, 154-171, 181-200, 207-229, 234-256, and 268-285; these read LLIALIPMFAWGSIGFVSNKIGG, FGMTLGALLFAIIVWLFK, TASLWIFGILGGILWSVG, VSVANPLSSGAQLVGGSLVGALV, FILGLTALTLLVIGFYFS, FATIAYSTVGYISYAVLF, AVILPMAVGMCLGAICFMKF, VVVKNMITGLMWGVGNVFMLLAA, LAIAFSFSQLGVIISIIGGILFL, and VVMGILCFVMGAILLGIV.

This sequence belongs to the GRP transporter (TC 2.A.7.5) family.

It localises to the cell membrane. This is Putative sugar uptake protein gbs2116 from Streptococcus agalactiae serotype III (strain NEM316).